A 262-amino-acid chain; its full sequence is 3-deoxy-manno-octulosonate cytidylyltransferase (262 aa).

It belongs to the KdsB family.

The protein resides in the cytoplasm. The catalysed reaction is 3-deoxy-alpha-D-manno-oct-2-ulosonate + CTP = CMP-3-deoxy-beta-D-manno-octulosonate + diphosphate. It functions in the pathway nucleotide-sugar biosynthesis; CMP-3-deoxy-D-manno-octulosonate biosynthesis; CMP-3-deoxy-D-manno-octulosonate from 3-deoxy-D-manno-octulosonate and CTP: step 1/1. It participates in bacterial outer membrane biogenesis; lipopolysaccharide biosynthesis. Its function is as follows. Activates KDO (a required 8-carbon sugar) for incorporation into bacterial lipopolysaccharide in Gram-negative bacteria. The sequence is that of 3-deoxy-manno-octulosonate cytidylyltransferase from Acidovorax ebreus (strain TPSY) (Diaphorobacter sp. (strain TPSY)).